Here is a 39-residue protein sequence, read N- to C-terminus: Photosystem II reaction center protein Y (39 aa).

The helical transmembrane segment at 4-24 threads the bilayer; it reads RVIVVVSPLLIAATWAAINIG.

Belongs to the PsbY family. As to quaternary structure, PSII is composed of 1 copy each of membrane proteins PsbA, PsbB, PsbC, PsbD, PsbE, PsbF, PsbH, PsbI, PsbJ, PsbK, PsbL, PsbM, PsbT, PsbX, PsbY, PsbZ, Psb30/Ycf12, peripheral proteins PsbO, CyanoQ (PsbQ), PsbU, PsbV and a large number of cofactors. It forms dimeric complexes.

It localises to the cellular thylakoid membrane. Its function is as follows. Loosely associated component of the core of photosystem II (PSII), it is not always seen in crystals. PSII is a light-driven water plastoquinone oxidoreductase, using light energy to abstract electrons from H(2)O, generating a proton gradient subsequently used for ATP formation. This chain is Photosystem II reaction center protein Y, found in Synechocystis sp. (strain ATCC 27184 / PCC 6803 / Kazusa).